The chain runs to 331 residues: Spondin-2 (331 aa).

Positions 1-26 are cleaved as a signal peptide; the sequence is MENPSPAAALGKALCALLLATLGAAG. The 191-residue stretch at 31–221 folds into the Spondin domain; the sequence is GESICSARAL…EITSSSPSHP (191 aa). C35 and C171 form a disulfide bridge. An a divalent metal cation-binding site is contributed by E141. D160, D188, and D192 together coordinate Ca(2+). One can recognise a TSP type-1 domain in the interval 277-331; the sequence is DCEVSLWSSWGLCGGHCGRLGTKSRTRYVRVQPANNGSPCPELEEEAECVPDNCV. A glycan (C-linked (Man) tryptophan) is linked at W283.

As to quaternary structure, monomer. Interacts with integrin. In terms of tissue distribution, expressed in normal lung tissue but not in lung carcinoma cell lines.

It is found in the secreted. It localises to the extracellular space. The protein resides in the extracellular matrix. Its function is as follows. Cell adhesion protein that promotes adhesion and outgrowth of hippocampal embryonic neurons. Binds directly to bacteria and their components and functions as an opsonin for macrophage phagocytosis of bacteria. Essential in the initiation of the innate immune response and represents a unique pattern-recognition molecule in the ECM for microbial pathogens. Binds bacterial lipopolysaccharide (LPS). In Homo sapiens (Human), this protein is Spondin-2 (SPON2).